The chain runs to 147 residues: Peptide methionine sulfoxide reductase MsrB (147 aa).

A compositionally biased stretch (basic and acidic residues) spans 1–11 (MPKIVKKEPKF). The segment at 1–25 (MPKIVKKEPKFVEQSGKKVTKSDEQ) is disordered. Positions 23–145 (DEQWREQLSD…NSVSLIFNKS (123 aa)) constitute a MsrB domain. Residues C62, C65, C111, and C114 each coordinate Zn(2+). Residue C134 is the Nucleophile of the active site.

It belongs to the MsrB Met sulfoxide reductase family. Requires Zn(2+) as cofactor.

The enzyme catalyses L-methionyl-[protein] + [thioredoxin]-disulfide + H2O = L-methionyl-(R)-S-oxide-[protein] + [thioredoxin]-dithiol. This chain is Peptide methionine sulfoxide reductase MsrB, found in Vibrio parahaemolyticus serotype O3:K6 (strain RIMD 2210633).